The sequence spans 233 residues: Phosphoribosylformylglycinamidine synthase subunit PurQ (233 aa).

Positions 3–233 (AAILVFPGIN…GLAQHLEKAA (231 aa)) constitute a Glutamine amidotransferase type-1 domain. Cysteine 87 acts as the Nucleophile in catalysis. Active-site residues include histidine 204 and glutamate 206.

As to quaternary structure, part of the FGAM synthase complex composed of 1 PurL, 1 PurQ and 2 PurS subunits.

It localises to the cytoplasm. The catalysed reaction is N(2)-formyl-N(1)-(5-phospho-beta-D-ribosyl)glycinamide + L-glutamine + ATP + H2O = 2-formamido-N(1)-(5-O-phospho-beta-D-ribosyl)acetamidine + L-glutamate + ADP + phosphate + H(+). It catalyses the reaction L-glutamine + H2O = L-glutamate + NH4(+). It functions in the pathway purine metabolism; IMP biosynthesis via de novo pathway; 5-amino-1-(5-phospho-D-ribosyl)imidazole from N(2)-formyl-N(1)-(5-phospho-D-ribosyl)glycinamide: step 1/2. In terms of biological role, part of the phosphoribosylformylglycinamidine synthase complex involved in the purines biosynthetic pathway. Catalyzes the ATP-dependent conversion of formylglycinamide ribonucleotide (FGAR) and glutamine to yield formylglycinamidine ribonucleotide (FGAM) and glutamate. The FGAM synthase complex is composed of three subunits. PurQ produces an ammonia molecule by converting glutamine to glutamate. PurL transfers the ammonia molecule to FGAR to form FGAM in an ATP-dependent manner. PurS interacts with PurQ and PurL and is thought to assist in the transfer of the ammonia molecule from PurQ to PurL. The polypeptide is Phosphoribosylformylglycinamidine synthase subunit PurQ (Bradyrhizobium diazoefficiens (strain JCM 10833 / BCRC 13528 / IAM 13628 / NBRC 14792 / USDA 110)).